Consider the following 196-residue polypeptide: Molybdenum cofactor guanylyltransferase (196 aa).

Residues 10 to 12 (LAG), lysine 23, asparagine 51, aspartate 69, and aspartate 99 contribute to the GTP site. Aspartate 99 is a Mg(2+) binding site.

This sequence belongs to the MobA family. As to quaternary structure, monomer. Mg(2+) is required as a cofactor.

It is found in the cytoplasm. It carries out the reaction Mo-molybdopterin + GTP + H(+) = Mo-molybdopterin guanine dinucleotide + diphosphate. In terms of biological role, transfers a GMP moiety from GTP to Mo-molybdopterin (Mo-MPT) cofactor (Moco or molybdenum cofactor) to form Mo-molybdopterin guanine dinucleotide (Mo-MGD) cofactor. The protein is Molybdenum cofactor guanylyltransferase of Shewanella woodyi (strain ATCC 51908 / MS32).